A 358-amino-acid chain; its full sequence is MNILKKKVLVGMSGGVDSSVAAYLLKEQGYEVIGATMQIWQDDKEFIEREGGCCSLSAVADARRVANKIGIPFYVMNFKDAFKKNVIDYFVDEYMEGRTPNPCVACNKFIKFSSFLDKAMTLGIDYVATGHYAIIEKQNNRYIVRKSEDDKKDQTYALYNLTQFQLERTLMPCGRYKKSEIREIAKKIGLRVHNKKDSQEICFIPDNDHGKYIKNRFPSKVRQGNFVDKSGNVLGTHKGIVYYTIGQRKGLDIALGKPMYVVDINPFRNEVVLGNLDDLLNTELIAKDVNYIPFDNLKEPMEVEAKIRYSQIPSKAVITPMENDKVKVNFTEKQRAITKGQSVVFYKGDLLIGGGIIE.

Residues 11–18 and M37 contribute to the ATP site; that span reads GMSGGVDS. Residue C106 is the Nucleophile of the active site. C106 and C202 are joined by a disulfide. G130 contacts ATP. Residues 152–154 form an interaction with tRNA region; it reads KDQ. The Cysteine persulfide intermediate role is filled by C202. Residues 308-309 are interaction with tRNA; the sequence is RY.

This sequence belongs to the MnmA/TRMU family.

The protein localises to the cytoplasm. It carries out the reaction S-sulfanyl-L-cysteinyl-[protein] + uridine(34) in tRNA + AH2 + ATP = 2-thiouridine(34) in tRNA + L-cysteinyl-[protein] + A + AMP + diphosphate + H(+). Its function is as follows. Catalyzes the 2-thiolation of uridine at the wobble position (U34) of tRNA, leading to the formation of s(2)U34. In Clostridium tetani (strain Massachusetts / E88), this protein is tRNA-specific 2-thiouridylase MnmA 2.